A 201-amino-acid chain; its full sequence is Probable molybdenum cofactor guanylyltransferase (201 aa).

Residues Leu-6–Gly-8, Lys-18, Asp-67, and Asp-92 contribute to the GTP site. Residue Asp-92 participates in Mg(2+) binding.

The protein belongs to the MobA family. Mg(2+) is required as a cofactor.

The protein localises to the cytoplasm. It catalyses the reaction Mo-molybdopterin + GTP + H(+) = Mo-molybdopterin guanine dinucleotide + diphosphate. In terms of biological role, transfers a GMP moiety from GTP to Mo-molybdopterin (Mo-MPT) cofactor (Moco or molybdenum cofactor) to form Mo-molybdopterin guanine dinucleotide (Mo-MGD) cofactor. In Thermococcus kodakarensis (strain ATCC BAA-918 / JCM 12380 / KOD1) (Pyrococcus kodakaraensis (strain KOD1)), this protein is Probable molybdenum cofactor guanylyltransferase.